Reading from the N-terminus, the 201-residue chain is Small ribosomal subunit protein uS4 (201 aa).

One can recognise an S4 RNA-binding domain in the interval 91-157; it reads SRLDNVIYRA…VPFQIARETA (67 aa).

This sequence belongs to the universal ribosomal protein uS4 family. As to quaternary structure, part of the 30S ribosomal subunit. Contacts protein S5. The interaction surface between S4 and S5 is involved in control of translational fidelity.

Its function is as follows. One of the primary rRNA binding proteins, it binds directly to 16S rRNA where it nucleates assembly of the body of the 30S subunit. With S5 and S12 plays an important role in translational accuracy. The chain is Small ribosomal subunit protein uS4 from Mycobacterium tuberculosis (strain ATCC 25177 / H37Ra).